The chain runs to 220 residues: Large ribosomal subunit protein uL3 (220 aa).

A disordered region spans residues 130–156; that stretch reads AIKRHGQSRGPMSHGSHFHRAPGSVGM.

The protein belongs to the universal ribosomal protein uL3 family. As to quaternary structure, part of the 50S ribosomal subunit. Forms a cluster with proteins L14 and L19.

In terms of biological role, one of the primary rRNA binding proteins, it binds directly near the 3'-end of the 23S rRNA, where it nucleates assembly of the 50S subunit. This is Large ribosomal subunit protein uL3 from Staphylococcus aureus (strain Mu3 / ATCC 700698).